Reading from the N-terminus, the 297-residue chain is Probable transcription factor vicR (297 aa).

Disordered stretches follow at residues 45–80 (LPGL…HSET) and 100–134 (TNQA…KNVH). The segment covering 58 to 67 (QKEEMRRKNA) has biased composition (basic and acidic residues). Over residues 69–80 (AQMQNDSNHSET) the composition is skewed to polar residues. Residues 110–124 (RSREDITNSRAERHS) show a composition bias toward basic and acidic residues.

It localises to the nucleus. Its function is as follows. Probable transcription factor; part of the gene cluster that mediates the biosynthesis of the secondary metabolite victorin, the molecular basis for Victoria blight of oats. May play a role in the regulation of the production of victorin. In Bipolaris victoriae (strain FI3) (Victoria blight of oats agent), this protein is Probable transcription factor vicR.